A 471-amino-acid polypeptide reads, in one-letter code: Glutamate--tRNA ligase (471 aa).

A 'HIGH' region motif is present at residues 9 to 19 (PSPTGYLHVGG). 4 residues coordinate Zn(2+): Cys98, Cys100, Cys125, and His127. A 'KMSKS' region motif is present at residues 237–241 (KLSKR). Lys240 is an ATP binding site.

The protein belongs to the class-I aminoacyl-tRNA synthetase family. Glutamate--tRNA ligase type 1 subfamily. As to quaternary structure, monomer. Zn(2+) serves as cofactor.

Its subcellular location is the cytoplasm. The catalysed reaction is tRNA(Glu) + L-glutamate + ATP = L-glutamyl-tRNA(Glu) + AMP + diphosphate. In terms of biological role, catalyzes the attachment of glutamate to tRNA(Glu) in a two-step reaction: glutamate is first activated by ATP to form Glu-AMP and then transferred to the acceptor end of tRNA(Glu). The chain is Glutamate--tRNA ligase from Escherichia coli O157:H7.